The primary structure comprises 390 residues: Queuine tRNA-ribosyltransferase (390 aa).

Asp92 functions as the Proton acceptor in the catalytic mechanism. Residues 92 to 96 (DSGGF), Asp146, Gln195, and Gly222 contribute to the substrate site. The RNA binding stretch occupies residues 253–259 (GVGTPED). Residue Asp272 is the Nucleophile of the active site. The interval 277–281 (TRNAR) is RNA binding; important for wobble base 34 recognition. 4 residues coordinate Zn(2+): Cys310, Cys312, Cys315, and His354.

It belongs to the queuine tRNA-ribosyltransferase family. Homodimer. Within each dimer, one monomer is responsible for RNA recognition and catalysis, while the other monomer binds to the replacement base PreQ1. Requires Zn(2+) as cofactor.

The enzyme catalyses 7-aminomethyl-7-carbaguanine + guanosine(34) in tRNA = 7-aminomethyl-7-carbaguanosine(34) in tRNA + guanine. Its pathway is tRNA modification; tRNA-queuosine biosynthesis. Its function is as follows. Catalyzes the base-exchange of a guanine (G) residue with the queuine precursor 7-aminomethyl-7-deazaguanine (PreQ1) at position 34 (anticodon wobble position) in tRNAs with GU(N) anticodons (tRNA-Asp, -Asn, -His and -Tyr). Catalysis occurs through a double-displacement mechanism. The nucleophile active site attacks the C1' of nucleotide 34 to detach the guanine base from the RNA, forming a covalent enzyme-RNA intermediate. The proton acceptor active site deprotonates the incoming PreQ1, allowing a nucleophilic attack on the C1' of the ribose to form the product. After dissociation, two additional enzymatic reactions on the tRNA convert PreQ1 to queuine (Q), resulting in the hypermodified nucleoside queuosine (7-(((4,5-cis-dihydroxy-2-cyclopenten-1-yl)amino)methyl)-7-deazaguanosine). The protein is Queuine tRNA-ribosyltransferase of Acidovorax ebreus (strain TPSY) (Diaphorobacter sp. (strain TPSY)).